The chain runs to 178 residues: Cytochrome b6-f complex iron-sulfur subunit (178 aa).

The chain crosses the membrane as a helical span at residues 20 to 42; sequence LLTFGSVTGVALGALYPVVNYFI. A Rieske domain is found at 65 to 161; that stretch reads ASGWLADHKE…VNVENDNVFV (97 aa). Positions 107, 109, 125, and 128 each coordinate [2Fe-2S] cluster. C112 and C127 are joined by a disulfide.

The protein belongs to the Rieske iron-sulfur protein family. As to quaternary structure, the 4 large subunits of the cytochrome b6-f complex are cytochrome b6, subunit IV (17 kDa polypeptide, PetD), cytochrome f and the Rieske protein, while the 4 small subunits are PetG, PetL, PetM and PetN. The complex functions as a dimer. [2Fe-2S] cluster is required as a cofactor.

It localises to the cellular thylakoid membrane. It carries out the reaction 2 oxidized [plastocyanin] + a plastoquinol + 2 H(+)(in) = 2 reduced [plastocyanin] + a plastoquinone + 4 H(+)(out). Functionally, component of the cytochrome b6-f complex, which mediates electron transfer between photosystem II (PSII) and photosystem I (PSI), cyclic electron flow around PSI, and state transitions. The sequence is that of Cytochrome b6-f complex iron-sulfur subunit from Synechococcus sp. (strain RCC307).